Reading from the N-terminus, the 399-residue chain is 5'-C-glycyluridine monooxygenase-decarboxylase (399 aa).

Threonine 179 provides a ligand contact to phosphate. Lysine 230 carries the N6-(pyridoxal phosphate)lysine modification. Phosphate-binding residues include arginine 318, arginine 322, arginine 353, and arginine 367.

The protein belongs to the SelA family. As to quaternary structure, homooctamer; tetramer of homodimers. Pyridoxal 5'-phosphate is required as a cofactor.

It catalyses the reaction (5'S,6'R)-C-glycyluridine + O2 = uridine-5'-carboxamide + CO2 + H2O. Its pathway is antibiotic biosynthesis. With respect to regulation, activity is dependent on phosphate. Functionally, monooxygenase-decarboxylase involved in the biosynthesis of the capuramycin-type nucleoside antibiotic A-503083. Catalyzes the oxidative decarboxylation of 5'-C-glycyluridine (GlyU) to uridine-5'-carboxamide (CarU). Is stereospecific for the (5'S,6'R)-diastereomer of GlyU. Directly incorporates a single oxygen atom from O(2) into the product CarU. In Streptomyces sp, this protein is 5'-C-glycyluridine monooxygenase-decarboxylase.